A 195-amino-acid chain; its full sequence is Molybdenum cofactor guanylyltransferase (195 aa).

Residues 10 to 12 (LAG), lysine 23, asparagine 51, aspartate 69, and aspartate 99 contribute to the GTP site. A Mg(2+)-binding site is contributed by aspartate 99.

It belongs to the MobA family. Monomer. The cofactor is Mg(2+).

The protein localises to the cytoplasm. It catalyses the reaction Mo-molybdopterin + GTP + H(+) = Mo-molybdopterin guanine dinucleotide + diphosphate. Its function is as follows. Transfers a GMP moiety from GTP to Mo-molybdopterin (Mo-MPT) cofactor (Moco or molybdenum cofactor) to form Mo-molybdopterin guanine dinucleotide (Mo-MGD) cofactor. This Histophilus somni (strain 129Pt) (Haemophilus somnus) protein is Molybdenum cofactor guanylyltransferase.